A 146-amino-acid polypeptide reads, in one-letter code: Stress enhanced protein 1, chloroplastic (146 aa).

The transit peptide at 1–73 (MALSQVSASL…GNRAASVSIR (73 aa)) directs the protein to the chloroplast. The next 2 membrane-spanning stretches (helical) occupy residues 84–104 (LDIWLGRGAMVGFAVAITVEI) and 120–140 (LPTVALAVTALVGVLAAVFIF).

It belongs to the ELIP/psbS family.

It is found in the plastid. The protein localises to the chloroplast thylakoid membrane. In terms of biological role, may be involved in non-photochemical quenching, a process that maintains the balance between dissipation and utilization of light energy to minimize generation of oxidizing molecules, thereby protecting the plant against photo-oxidative damage. May play a photoprotective role in the thylakoid membrane in response to light stress. This chain is Stress enhanced protein 1, chloroplastic, found in Arabidopsis thaliana (Mouse-ear cress).